Consider the following 92-residue polypeptide: Acylphosphatase (92 aa).

The region spanning 5-92 (RVKVKVNGRV…GVFERFEVRF (88 aa)) is the Acylphosphatase-like domain. Active-site residues include Arg-20 and Asn-38.

This sequence belongs to the acylphosphatase family.

The catalysed reaction is an acyl phosphate + H2O = a carboxylate + phosphate + H(+). This is Acylphosphatase (acyP) from Syntrophotalea carbinolica (strain DSM 2380 / NBRC 103641 / GraBd1) (Pelobacter carbinolicus).